The sequence spans 219 residues: Pyridoxine/pyridoxamine 5'-phosphate oxidase (219 aa).

The tract at residues 1–23 is disordered; the sequence is MTSSVIPPSPSAADYAAEGDRPL. Residues 66–71, 81–82, Lys-88, and Gln-110 each bind FMN; these read RIVLLK and FT. Substrate is bound at residue Lys-71. 3 residues coordinate substrate: Tyr-128, Arg-132, and Ser-136. FMN contacts are provided by residues 145 to 146 and Trp-191; that span reads QS. Substrate is bound at residue 197-199; sequence RMH. Arg-201 contacts FMN.

Belongs to the pyridoxamine 5'-phosphate oxidase family. In terms of assembly, homodimer. The cofactor is FMN.

The catalysed reaction is pyridoxamine 5'-phosphate + O2 + H2O = pyridoxal 5'-phosphate + H2O2 + NH4(+). The enzyme catalyses pyridoxine 5'-phosphate + O2 = pyridoxal 5'-phosphate + H2O2. It functions in the pathway cofactor metabolism; pyridoxal 5'-phosphate salvage; pyridoxal 5'-phosphate from pyridoxamine 5'-phosphate: step 1/1. It participates in cofactor metabolism; pyridoxal 5'-phosphate salvage; pyridoxal 5'-phosphate from pyridoxine 5'-phosphate: step 1/1. In terms of biological role, catalyzes the oxidation of either pyridoxine 5'-phosphate (PNP) or pyridoxamine 5'-phosphate (PMP) into pyridoxal 5'-phosphate (PLP). This chain is Pyridoxine/pyridoxamine 5'-phosphate oxidase, found in Hyphomonas neptunium (strain ATCC 15444).